Reading from the N-terminus, the 301-residue chain is Probable 5-dehydro-4-deoxyglucarate dehydratase (301 aa).

This sequence belongs to the DapA family.

The enzyme catalyses 5-dehydro-4-deoxy-D-glucarate + H(+) = 2,5-dioxopentanoate + CO2 + H2O. It functions in the pathway carbohydrate acid metabolism; D-glucarate degradation; 2,5-dioxopentanoate from D-glucarate: step 2/2. In Xanthobacter autotrophicus (strain ATCC BAA-1158 / Py2), this protein is Probable 5-dehydro-4-deoxyglucarate dehydratase.